The chain runs to 495 residues: Cysteine-rich secretory protein LCCL domain-containing 2 (495 aa).

Positions 1–22 (MSCLLNNMVLMGLALLVCGVQA) are cleaved as a signal peptide. An N-linked (GlcNAc...) asparagine glycan is attached at N27. The SCP domain occupies 60-200 (LMLHNKLRGQ…ENAVYLVCNY (141 aa)). 2 LCCL domains span residues 282–377 (MTQV…SSSF) and 383–486 (TETA…QNGN). Cystine bridges form between C288/C306, C310/C330, C389/C411, and C415/C438.

As to quaternary structure, binds to heparin, dermatan sulfate and chondroitin sulfate. Present in kidney renal tubules (at protein level).

The protein localises to the secreted. Functionally, promotes matrix assembly. This chain is Cysteine-rich secretory protein LCCL domain-containing 2 (Crispld2), found in Mus musculus (Mouse).